The following is a 339-amino-acid chain: NADH-quinone oxidoreductase subunit H (339 aa).

Helical transmembrane passes span Phe-10 to Val-30, Pro-50 to Phe-70, Ile-82 to Ile-102, Val-115 to Gly-135, Ile-155 to Leu-175, Leu-187 to Leu-207, Met-235 to Thr-255, Ile-275 to Ile-295, and Gly-311 to Phe-331.

This sequence belongs to the complex I subunit 1 family. As to quaternary structure, NDH-1 is composed of 14 different subunits. Subunits NuoA, H, J, K, L, M, N constitute the membrane sector of the complex.

The protein localises to the cell inner membrane. It catalyses the reaction a quinone + NADH + 5 H(+)(in) = a quinol + NAD(+) + 4 H(+)(out). Functionally, NDH-1 shuttles electrons from NADH, via FMN and iron-sulfur (Fe-S) centers, to quinones in the respiratory chain. The immediate electron acceptor for the enzyme in this species is believed to be ubiquinone. Couples the redox reaction to proton translocation (for every two electrons transferred, four hydrogen ions are translocated across the cytoplasmic membrane), and thus conserves the redox energy in a proton gradient. This subunit may bind ubiquinone. The chain is NADH-quinone oxidoreductase subunit H from Rickettsia typhi (strain ATCC VR-144 / Wilmington).